We begin with the raw amino-acid sequence, 207 residues long: MAKYLGPKLKLSRREGTDLFLKSGIRAIDSKCKLDQPPGQHNMRKSRFSDYGIQLREKQKVRRIYGILERQFSNYYKRAARIKGNTGENLLKLLESRLDNTVYRMGFGATRAEARQLVSHKSIMVENRIVNIASYQVVPNTVIKIHKKSHKQSRIRASLELSEQQREKLAWIEVDPIKLQGLFKRYPERSELSANIDEHLIIELYSK.

One can recognise an S4 RNA-binding domain in the interval 96–156 (SRLDNTVYRM…KKSHKQSRIR (61 aa)).

The protein belongs to the universal ribosomal protein uS4 family. In terms of assembly, part of the 30S ribosomal subunit. Contacts protein S5. The interaction surface between S4 and S5 is involved in control of translational fidelity.

Its function is as follows. One of the primary rRNA binding proteins, it binds directly to 16S rRNA where it nucleates assembly of the body of the 30S subunit. In terms of biological role, with S5 and S12 plays an important role in translational accuracy. The protein is Small ribosomal subunit protein uS4 of Blochmanniella pennsylvanica (strain BPEN).